The sequence spans 77 residues: Putative antitoxin VapB3 (77 aa).

It belongs to the UPF0330 family.

Possibly the antitoxin component of a type II toxin-antitoxin (TA) system. Its cognate toxin is VapC3 (Potential). The chain is Putative antitoxin VapB3 (vapB3) from Methanocaldococcus jannaschii (strain ATCC 43067 / DSM 2661 / JAL-1 / JCM 10045 / NBRC 100440) (Methanococcus jannaschii).